A 303-amino-acid polypeptide reads, in one-letter code: Aspartate carbamoyltransferase catalytic subunit (303 aa).

2 residues coordinate carbamoyl phosphate: arginine 51 and threonine 52. An L-aspartate-binding site is contributed by lysine 80. Carbamoyl phosphate contacts are provided by arginine 101, histidine 129, and glutamine 132. L-aspartate is bound by residues arginine 162 and arginine 221. 2 residues coordinate carbamoyl phosphate: leucine 260 and proline 261.

This sequence belongs to the aspartate/ornithine carbamoyltransferase superfamily. ATCase family. As to quaternary structure, heterooligomer of catalytic and regulatory chains.

The enzyme catalyses carbamoyl phosphate + L-aspartate = N-carbamoyl-L-aspartate + phosphate + H(+). Its pathway is pyrimidine metabolism; UMP biosynthesis via de novo pathway; (S)-dihydroorotate from bicarbonate: step 2/3. Catalyzes the condensation of carbamoyl phosphate and aspartate to form carbamoyl aspartate and inorganic phosphate, the committed step in the de novo pyrimidine nucleotide biosynthesis pathway. This Saccharolobus islandicus (strain M.14.25 / Kamchatka #1) (Sulfolobus islandicus) protein is Aspartate carbamoyltransferase catalytic subunit.